The chain runs to 281 residues: Histidine biosynthesis bifunctional protein hisIE, chloroplastic (281 aa).

Residues 1 to 50 constitute a chloroplast transit peptide; the sequence is MAVSYNALAQSLARSSCFIPKPYSFRDTKLRSRSNVVFACNDNKNIALQA. The phosphoribosyl-AMP cyclohydrolase stretch occupies residues 51–178; the sequence is KVDNLLDRIK…NKLALTTLYS (128 aa). The phosphoribosyl-ATP pyrophosphohydrolase stretch occupies residues 179–281; the sequence is LESIISKRKE…GIEEKQNRTK (103 aa).

This sequence in the N-terminal section; belongs to the PRA-CH family. The protein in the C-terminal section; belongs to the PRA-PH family. In terms of tissue distribution, ubiquitously expressed throughout development.

The protein resides in the plastid. It localises to the chloroplast. It carries out the reaction 1-(5-phospho-beta-D-ribosyl)-ATP + H2O = 1-(5-phospho-beta-D-ribosyl)-5'-AMP + diphosphate + H(+). The enzyme catalyses 1-(5-phospho-beta-D-ribosyl)-5'-AMP + H2O = 1-(5-phospho-beta-D-ribosyl)-5-[(5-phospho-beta-D-ribosylamino)methylideneamino]imidazole-4-carboxamide. The protein operates within amino-acid biosynthesis; L-histidine biosynthesis; L-histidine from 5-phospho-alpha-D-ribose 1-diphosphate: step 2/9. It participates in amino-acid biosynthesis; L-histidine biosynthesis; L-histidine from 5-phospho-alpha-D-ribose 1-diphosphate: step 3/9. In Arabidopsis thaliana (Mouse-ear cress), this protein is Histidine biosynthesis bifunctional protein hisIE, chloroplastic (HISN2).